Reading from the N-terminus, the 406-residue chain is MAIEQTAITRATFDEVILPIYAPAEFIPVKGQGSRIWDQQGKEYVDFAGGIAVTALGHCHPALVNALKTQGETLWHISNVFTNEPALRLGRKLIEATFAERVVFMNSGTEANETAFKLARHYACVRHSPFKTKIIAFHNAFHGRSLFTVSVGGQPKYSDGFGPKPADIIHVPFNDLHAVKAVMDDHTCAVVVEPIQGEGGVTAATPEFLQGLRELCDQHQALLVFDEVQCGMGRTGDLFAYMHYGVTPDILTSAKALGGGFPISAMLTTAEIASAFHPGSHGSTYGGNPLACAVAGAAFDIINTPEVLEGIQAKRQRFVDHLQKIDQQYDVFSDIRGMGLLIGAELKPQYKGRARDFLYAGAEAGVMVLNAGPDVMRFAPSLVVEDADIDEGMQRFAHAVAKVVGA.

Pyridoxal 5'-phosphate contacts are provided by residues 108–109 (GT) and Phe141. Arg144 lines the N(2)-acetyl-L-ornithine pocket. 226–229 (DEVQ) is a binding site for pyridoxal 5'-phosphate. Lys255 carries the N6-(pyridoxal phosphate)lysine modification. A N(2)-acetyl-L-ornithine-binding site is contributed by Ser283. Residue Thr284 participates in pyridoxal 5'-phosphate binding.

This sequence belongs to the class-III pyridoxal-phosphate-dependent aminotransferase family. ArgD subfamily. Homodimer. It depends on pyridoxal 5'-phosphate as a cofactor.

Its subcellular location is the cytoplasm. It catalyses the reaction N(2)-acetyl-L-ornithine + 2-oxoglutarate = N-acetyl-L-glutamate 5-semialdehyde + L-glutamate. The enzyme catalyses N-succinyl-(2S,6S)-2,6-diaminopimelate + 2-oxoglutarate = (S)-2-succinylamino-6-oxoheptanedioate + L-glutamate. It participates in amino-acid biosynthesis; L-arginine biosynthesis; N(2)-acetyl-L-ornithine from L-glutamate: step 4/4. Its pathway is amino-acid biosynthesis; L-lysine biosynthesis via DAP pathway; LL-2,6-diaminopimelate from (S)-tetrahydrodipicolinate (succinylase route): step 2/3. In terms of biological role, involved in both the arginine and lysine biosynthetic pathways. This chain is Acetylornithine/succinyldiaminopimelate aminotransferase, found in Escherichia coli (strain K12).